The following is a 319-amino-acid chain: Guanosine ABC transporter permease protein NupQ (319 aa).

9 consecutive transmembrane segments (helical) span residues 6 to 26 (ILSIIVPATLVYAAPLILTAL), 39 to 59 (IGLEGLMIIGAFTSVLFNLFF), 65 to 85 (AAAPWLSLLAAMAAGALFSLI), 99 to 119 (VSGVAINMLALGATLFIVKLI), 159 to 179 (ILAIALAFISWFILFKTPFGL), 204 to 224 (IGVMISGLFGGLGGGVYASTI), 235 to 255 (GQGFIALAALVFGKWHPIGAL), 257 to 277 (AALFFGFAQSLSIIGSLLPLF), and 282 to 302 (NVYMLMAPYILTILALTGFIG).

Belongs to the binding-protein-dependent transport system permease family. As to quaternary structure, the complex is composed of two ATP-binding proteins (NupO), two transmembrane proteins (NupP and NupQ) and a solute-binding protein (NupN).

It localises to the cell membrane. Its function is as follows. Part of an ABC transporter complex involved in the uptake of guanosine. Responsible for the translocation of the substrate across the membrane. May be a nucleoside transporter of broad specificity but with various affinities for different substrates. The polypeptide is Guanosine ABC transporter permease protein NupQ (Bacillus subtilis (strain 168)).